A 289-amino-acid polypeptide reads, in one-letter code: Cyclin-dependent kinase inhibitor 4 (289 aa).

3 disordered regions span residues 1–31 (MGKY…ESSI), 56–160 (LQQQ…VSES), and 227–248 (SESN…TTPE). Positions 13-28 (AGAGAGGGGGGGGGGE) are enriched in gly residues. Low complexity predominate over residues 56–80 (LQQQQQRCLLQKPSSPSSLPPTSAS). The segment covering 134–144 (CGRNPNPRSNL) has biased composition (polar residues).

It belongs to the CDI family. ICK/KRP subfamily. In terms of assembly, specifically interacts with CDKA-1, but not with CDKB1-1. Interacts with CYCD4-1. Binds to FBL17. In terms of tissue distribution, expressed in leaves and flowers and at lower levels in roots.

The protein localises to the nucleus. The protein resides in the nucleoplasm. Binds and inhibits CYCD2-1/CDKA-1 complex kinase activity. May target specifically CDKA-1. In Arabidopsis thaliana (Mouse-ear cress), this protein is Cyclin-dependent kinase inhibitor 4 (KRP4).